Here is a 263-residue protein sequence, read N- to C-terminus: UPF0328 protein ECU08_2060 (263 aa).

The protein belongs to the UPF0328 family.

The sequence is that of UPF0328 protein ECU08_2060 from Encephalitozoon cuniculi (strain GB-M1) (Microsporidian parasite).